A 571-amino-acid polypeptide reads, in one-letter code: Sulfite reductase [NADPH] hemoprotein beta-component (571 aa).

[4Fe-4S] cluster contacts are provided by Cys-436, Cys-442, Cys-481, and Cys-485. Cys-485 is a siroheme binding site.

It belongs to the nitrite and sulfite reductase 4Fe-4S domain family. In terms of assembly, alpha(8)-beta(8). The alpha component is a flavoprotein, the beta component is a hemoprotein. The cofactor is siroheme. It depends on [4Fe-4S] cluster as a cofactor.

The catalysed reaction is hydrogen sulfide + 3 NADP(+) + 3 H2O = sulfite + 3 NADPH + 4 H(+). It participates in sulfur metabolism; hydrogen sulfide biosynthesis; hydrogen sulfide from sulfite (NADPH route): step 1/1. In terms of biological role, component of the sulfite reductase complex that catalyzes the 6-electron reduction of sulfite to sulfide. This is one of several activities required for the biosynthesis of L-cysteine from sulfate. The protein is Sulfite reductase [NADPH] hemoprotein beta-component of Bacillus velezensis (strain DSM 23117 / BGSC 10A6 / LMG 26770 / FZB42) (Bacillus amyloliquefaciens subsp. plantarum).